The following is a 188-amino-acid chain: MRVIASSIRKGNVLEQDGKLYVVLSAENIHPGKGTPVSQIEMRRISDGVKVSERYKTTDQVEKATIEERNYTFLYEDGEGFHFMEPESFDQVQVTKDVVGNSAPYLAENMVVKLSMHDTTAVAITLPQRATLEVVETEPVTKGQTASSSYKPAILSNGVRTAVPPHVGVGTRVVVLTEDGSYVERAKD.

The protein belongs to the elongation factor P family.

It is found in the cytoplasm. Its pathway is protein biosynthesis; polypeptide chain elongation. In terms of biological role, involved in peptide bond synthesis. Stimulates efficient translation and peptide-bond synthesis on native or reconstituted 70S ribosomes in vitro. Probably functions indirectly by altering the affinity of the ribosome for aminoacyl-tRNA, thus increasing their reactivity as acceptors for peptidyl transferase. The sequence is that of Elongation factor P from Rhodopseudomonas palustris (strain BisB5).